Consider the following 344-residue polypeptide: tRNA N6-adenosine threonylcarbamoyltransferase (344 aa).

Positions 119 and 123 each coordinate Fe cation. Residues 141-145 (VVSGG), D174, G187, D191, and N280 each bind substrate. D310 contacts Fe cation.

The protein belongs to the KAE1 / TsaD family. Fe(2+) is required as a cofactor.

It is found in the cytoplasm. The enzyme catalyses L-threonylcarbamoyladenylate + adenosine(37) in tRNA = N(6)-L-threonylcarbamoyladenosine(37) in tRNA + AMP + H(+). Its function is as follows. Required for the formation of a threonylcarbamoyl group on adenosine at position 37 (t(6)A37) in tRNAs that read codons beginning with adenine. Is involved in the transfer of the threonylcarbamoyl moiety of threonylcarbamoyl-AMP (TC-AMP) to the N6 group of A37, together with TsaE and TsaB. TsaD likely plays a direct catalytic role in this reaction. This Listeria welshimeri serovar 6b (strain ATCC 35897 / DSM 20650 / CCUG 15529 / CIP 8149 / NCTC 11857 / SLCC 5334 / V8) protein is tRNA N6-adenosine threonylcarbamoyltransferase.